The following is a 487-amino-acid chain: Aspartyl/glutamyl-tRNA(Asn/Gln) amidotransferase subunit B (487 aa).

It belongs to the GatB/GatE family. GatB subfamily. Heterotrimer of A, B and C subunits.

The enzyme catalyses L-glutamyl-tRNA(Gln) + L-glutamine + ATP + H2O = L-glutaminyl-tRNA(Gln) + L-glutamate + ADP + phosphate + H(+). It catalyses the reaction L-aspartyl-tRNA(Asn) + L-glutamine + ATP + H2O = L-asparaginyl-tRNA(Asn) + L-glutamate + ADP + phosphate + 2 H(+). Functionally, allows the formation of correctly charged Asn-tRNA(Asn) or Gln-tRNA(Gln) through the transamidation of misacylated Asp-tRNA(Asn) or Glu-tRNA(Gln) in organisms which lack either or both of asparaginyl-tRNA or glutaminyl-tRNA synthetases. The reaction takes place in the presence of glutamine and ATP through an activated phospho-Asp-tRNA(Asn) or phospho-Glu-tRNA(Gln). The sequence is that of Aspartyl/glutamyl-tRNA(Asn/Gln) amidotransferase subunit B from Chlamydia abortus (strain DSM 27085 / S26/3) (Chlamydophila abortus).